A 697-amino-acid chain; its full sequence is Polyribonucleotide nucleotidyltransferase (697 aa).

Residues D487 and D493 each contribute to the Mg(2+) site. A KH domain is found at 554-613 (PRIETIQIKPSKIAVVIGPGGKQIRAIIEQTGVQIDIDDTGLVNIAAIDLVSIEKAKAII). The S1 motif domain occupies 623–691 (GRIYSGKAIS…ERGQIKLSRK (69 aa)).

The protein belongs to the polyribonucleotide nucleotidyltransferase family. Mg(2+) is required as a cofactor.

Its subcellular location is the cytoplasm. The catalysed reaction is RNA(n+1) + phosphate = RNA(n) + a ribonucleoside 5'-diphosphate. In terms of biological role, involved in mRNA degradation. Catalyzes the phosphorolysis of single-stranded polyribonucleotides processively in the 3'- to 5'-direction. The chain is Polyribonucleotide nucleotidyltransferase from Protochlamydia amoebophila (strain UWE25).